The chain runs to 41 residues: Photosystem II reaction center protein L (41 aa).

A helical membrane pass occupies residues 20-40 (SLYLGLLLVFVVGLLFSSYFL).

This sequence belongs to the PsbL family. As to quaternary structure, PSII is composed of 1 copy each of membrane proteins PsbA, PsbB, PsbC, PsbD, PsbE, PsbF, PsbH, PsbI, PsbJ, PsbK, PsbL, PsbM, PsbT, PsbX, PsbY, PsbZ, Psb30/Ycf12, peripheral proteins PsbO, CyanoQ (PsbQ), PsbU, PsbV and a large number of cofactors. It forms dimeric complexes.

The protein resides in the cellular thylakoid membrane. Its function is as follows. One of the components of the core complex of photosystem II (PSII). PSII is a light-driven water:plastoquinone oxidoreductase that uses light energy to abstract electrons from H(2)O, generating O(2) and a proton gradient subsequently used for ATP formation. It consists of a core antenna complex that captures photons, and an electron transfer chain that converts photonic excitation into a charge separation. This subunit is found at the monomer-monomer interface and is required for correct PSII assembly and/or dimerization. This chain is Photosystem II reaction center protein L, found in Synechococcus sp. (strain JA-2-3B'a(2-13)) (Cyanobacteria bacterium Yellowstone B-Prime).